Consider the following 94-residue polypeptide: DNA-binding protein HU (94 aa).

This sequence belongs to the bacterial histone-like protein family. As to quaternary structure, homodimer.

Functionally, histone-like DNA-binding protein which is capable of wrapping DNA to stabilize it, and thus to prevent its denaturation under extreme environmental conditions. The sequence is that of DNA-binding protein HU (hup) from Helicobacter pylori (strain J99 / ATCC 700824) (Campylobacter pylori J99).